The sequence spans 277 residues: FGERPYWWVHETKFYGAGPAPSLQQFPITCETGPGSPSGHAMGAAGVWYVMVTALLSIAREKQCPPLLYRFLYIGLWMLMGLVELVVCISRVYMAAHFPHQVIAGIITGTLVAEVVSKEKWIYSASLKKYFLITLFLTSFAVGFYVLLKALDVDLLWTMEKAQKWCIRPEWVHLDSAPFASLLRNMGSLFGLGLGLHSPFYKTTKMRIMSAPLRIGCIVISVSLLHLLDGWTFSPENHMTFYALSFGKSAVALLIPTTLVPWALSKIYPVKTEGKNL.

Substrate is bound at residue arginine 4. 2 consecutive transmembrane segments (helical) span residues 39-59 (GHAM…LSIA) and 67-87 (LLYR…ELVV). The Proton donor role is filled by histidine 40. Substrate is bound at residue arginine 91. Histidine 97 functions as the Nucleophile in the catalytic mechanism. 3 helical membrane passes run 131–151 (FLIT…LKAL), 215–235 (IGCI…TFSP), and 250–270 (AVAL…IYPV). Residues 274–277 (GKNL) carry the Prevents secretion from ER motif.

This sequence belongs to the glucose-6-phosphatase family.

It is found in the endoplasmic reticulum membrane. It catalyses the reaction D-glucose 6-phosphate + H2O = D-glucose + phosphate. Its pathway is carbohydrate biosynthesis; gluconeogenesis. In terms of biological role, hydrolyzes glucose-6-phosphate to glucose in the endoplasmic reticulum. Forms with the glucose-6-phosphate transporter (SLC37A4/G6PT) the complex responsible for glucose production in the terminal step of glycogenolysis and gluconeogenesis. Hence, it is the key enzyme in homeostatic regulation of blood glucose levels. The sequence is that of Glucose-6-phosphatase catalytic subunit 1 (g6pc1) from Haplochromis xenognathus (Lake Victoria cichlid).